The sequence spans 229 residues: DNA mismatch repair protein MutH (229 aa).

Belongs to the MutH family.

Its subcellular location is the cytoplasm. Sequence-specific endonuclease that cleaves unmethylated GATC sequences. It is involved in DNA mismatch repair. This Escherichia coli O6:K15:H31 (strain 536 / UPEC) protein is DNA mismatch repair protein MutH.